A 160-amino-acid chain; its full sequence is Nucleotide-binding protein BP2916 (160 aa).

It belongs to the YajQ family.

Nucleotide-binding protein. This is Nucleotide-binding protein BP2916 from Bordetella pertussis (strain Tohama I / ATCC BAA-589 / NCTC 13251).